The chain runs to 183 residues: ATP synthase subunit delta (183 aa).

Belongs to the ATPase delta chain family. F-type ATPases have 2 components, F(1) - the catalytic core - and F(0) - the membrane proton channel. F(1) has five subunits: alpha(3), beta(3), gamma(1), delta(1), epsilon(1). F(0) has three main subunits: a(1), b(2) and c(10-14). The alpha and beta chains form an alternating ring which encloses part of the gamma chain. F(1) is attached to F(0) by a central stalk formed by the gamma and epsilon chains, while a peripheral stalk is formed by the delta and b chains.

It is found in the cell membrane. In terms of biological role, f(1)F(0) ATP synthase produces ATP from ADP in the presence of a proton or sodium gradient. F-type ATPases consist of two structural domains, F(1) containing the extramembraneous catalytic core and F(0) containing the membrane proton channel, linked together by a central stalk and a peripheral stalk. During catalysis, ATP synthesis in the catalytic domain of F(1) is coupled via a rotary mechanism of the central stalk subunits to proton translocation. Its function is as follows. This protein is part of the stalk that links CF(0) to CF(1). It either transmits conformational changes from CF(0) to CF(1) or is implicated in proton conduction. The chain is ATP synthase subunit delta from Mycoplasmopsis synoviae (strain 53) (Mycoplasma synoviae).